The chain runs to 196 residues: uncharacterized protein (196 aa).

Residues 12 to 66 form the HTH cro/C1-type domain; that stretch reads LRAAREAQKMSQRELSARSGLTQSHISQIERGTMEPGLGSLVDVARALDLEIVLA. Positions 23–42 form a DNA-binding region, H-T-H motif; sequence QRELSARSGLTQSHISQIER. Positions 174-196 are disordered; that stretch reads VHRDRDDAVPRSAYALDEEDDNA.

This is an uncharacterized protein from Sinorhizobium fredii (strain NBRC 101917 / NGR234).